Here is a 77-residue protein sequence, read N- to C-terminus: Antitoxin VapB2 (77 aa).

The SpoVT-AbrB domain occupies 4-46; it reads ASVFMTNRSQAVRLPAEVRFSEEIKKLSVRVSGSDRILSPLNQ.

This sequence belongs to the VapB family. In terms of assembly, probably forms a complex with cognate toxin VapC2.

Antitoxin component of a type II toxin-antitoxin (TA) system. Neutralizes the effect of cognate toxin VapC2 but not non-cognate toxin VapC2. The sequence is that of Antitoxin VapB2 from Haemophilus influenzae (strain 86-028NP).